A 422-amino-acid polypeptide reads, in one-letter code: 5'-deoxyadenosine deaminase (422 aa).

2 residues coordinate Zn(2+): His-57 and His-59. Residues Glu-86 and His-178 each coordinate substrate. His-205 provides a ligand contact to Zn(2+). Glu-208 and Asp-294 together coordinate substrate. Asp-294 serves as a coordination point for Zn(2+).

Belongs to the metallo-dependent hydrolases superfamily. MTA/SAH deaminase family. In terms of assembly, homotetramer. Zn(2+) serves as cofactor.

It carries out the reaction 5'-deoxyadenosine + H2O + H(+) = 5'-deoxyinosine + NH4(+). It catalyses the reaction S-adenosyl-L-homocysteine + H2O + H(+) = S-inosyl-L-homocysteine + NH4(+). The enzyme catalyses S-methyl-5'-thioadenosine + H2O + H(+) = S-methyl-5'-thioinosine + NH4(+). The catalysed reaction is adenosine + H2O + H(+) = inosine + NH4(+). Its pathway is amino-acid biosynthesis; S-adenosyl-L-methionine biosynthesis. Functionally, catalyzes the deamination of three SAM-derived enzymatic products, namely 5'-deoxyadenosine, S-adenosyl-L-homocysteine, and 5'-methylthioadenosine, to produce the inosine analogs. Can also deaminate adenosine. The preferred substrate for this enzyme is 5'-deoxyadenosine, but all these substrates are efficiently deaminated. Likely functions in a S-adenosyl-L-methionine (SAM) recycling pathway from S-adenosyl-L-homocysteine (SAH) produced from SAM-dependent methylation reactions. May also be involved in the recycling of 5'-deoxyadenosine, whereupon the 5'-deoxyribose moiety of 5'-deoxyinosine is further metabolized to deoxyhexoses used for the biosynthesis of aromatic amino acids in methanogens. The polypeptide is 5'-deoxyadenosine deaminase (Methanococcus maripaludis (strain C6 / ATCC BAA-1332)).